The sequence spans 398 residues: MALEGLRKKYKTRQELVKALTPKRRSIHLNSNGHSNGTPCSNADVLAHIKHFLSLAANSLEQHQQPISIVFQNKKKKGDTSSPDIHTTLDFPLNGPHLCTHQFKLKRCAILLNLLKVVMEKLPLGKNTTVRDIFYSNVELFQRQANVVQWLDVIRFNFKLSPRKSLNIIPAQKGLVYSPFPIDIYDNILTCENEPKMQKQTIFPGKPCLIPFFQDDAVIKLGTTSMCNIVIVEKEAVFTKLVNNYHKLSTNTMLITGKGFPDFLTRLFLKKLEQYCSKLISDCSIFTDADPYGISIALNYTHSNERNAYICTMANYKGIRITQVLAQNNEVHNKSIQLLSLNQRDYSLAKNLIASLTANSWDIATSPLKNVIIECQREIFFQKKAEMNEIDARIFEYK.

The region spanning 40–175 (CSNADVLAHI…LNIIPAQKGL (136 aa)) is the Topo IIA-type catalytic domain. Tyrosine 135 acts as the O-(5'-phospho-DNA)-tyrosine intermediate in catalysis. Mg(2+) is bound by residues glutamate 233 and aspartate 288.

The protein belongs to the TOP6A family. Mg(2+) is required as a cofactor.

The protein resides in the nucleus. It localises to the chromosome. It catalyses the reaction ATP-dependent breakage, passage and rejoining of double-stranded DNA.. Functionally, required for meiotic recombination. Mediates DNA cleavage that forms the double-strand breaks (DSB) that initiate meiotic recombination. The action of SPO11 is important in setting off a regulatory chain of events encompassing 5' to 3' resection. When there are no SPO11-DSBs, resection of a site specific VDE-DSB takes place but it is faster than in wild-type meiosis and increases the risk of uncovering flanking homology. This Saccharomyces cerevisiae (strain ATCC 204508 / S288c) (Baker's yeast) protein is Meiosis-specific protein SPO11 (SPO11).